Here is a 185-residue protein sequence, read N- to C-terminus: Adenylate kinase (185 aa).

8 to 16 serves as a coordination point for ATP; the sequence is GIPGSGSTT.

It belongs to the archaeal adenylate kinase family.

The protein localises to the cytoplasm. It carries out the reaction AMP + ATP = 2 ADP. This is Adenylate kinase (adkA) from Methanothermobacter thermautotrophicus (strain ATCC 29096 / DSM 1053 / JCM 10044 / NBRC 100330 / Delta H) (Methanobacterium thermoautotrophicum).